Consider the following 301-residue polypeptide: Homoserine kinase (301 aa).

89–99 (KPGSGLGSSSA) serves as a coordination point for ATP.

The protein belongs to the GHMP kinase family. Homoserine kinase subfamily.

The protein localises to the cytoplasm. It carries out the reaction L-homoserine + ATP = O-phospho-L-homoserine + ADP + H(+). The protein operates within amino-acid biosynthesis; L-threonine biosynthesis; L-threonine from L-aspartate: step 4/5. Its function is as follows. Catalyzes the ATP-dependent phosphorylation of L-homoserine to L-homoserine phosphate. The sequence is that of Homoserine kinase from Methanococcus maripaludis (strain C5 / ATCC BAA-1333).